The chain runs to 424 residues: Serine--tRNA ligase (424 aa).

231-233 (TAE) is an L-serine binding site. 262-264 (RSE) is an ATP binding site. E285 serves as a coordination point for L-serine. 349-352 (EISS) lines the ATP pocket. L-serine is bound at residue S385.

This sequence belongs to the class-II aminoacyl-tRNA synthetase family. Type-1 seryl-tRNA synthetase subfamily. As to quaternary structure, homodimer. The tRNA molecule binds across the dimer.

Its subcellular location is the cytoplasm. The enzyme catalyses tRNA(Ser) + L-serine + ATP = L-seryl-tRNA(Ser) + AMP + diphosphate + H(+). It catalyses the reaction tRNA(Sec) + L-serine + ATP = L-seryl-tRNA(Sec) + AMP + diphosphate + H(+). It participates in aminoacyl-tRNA biosynthesis; selenocysteinyl-tRNA(Sec) biosynthesis; L-seryl-tRNA(Sec) from L-serine and tRNA(Sec): step 1/1. In terms of biological role, catalyzes the attachment of serine to tRNA(Ser). Is also able to aminoacylate tRNA(Sec) with serine, to form the misacylated tRNA L-seryl-tRNA(Sec), which will be further converted into selenocysteinyl-tRNA(Sec). This chain is Serine--tRNA ligase, found in Bacillus anthracis (strain A0248).